A 383-amino-acid chain; its full sequence is Chorismate synthase (383 aa).

NADP(+)-binding residues include arginine 39 and arginine 45. FMN-binding positions include 127 to 129 (RAS), 249 to 250 (QS), glycine 294, 309 to 313 (KPIPT), and arginine 335.

The protein belongs to the chorismate synthase family. As to quaternary structure, homotetramer. The cofactor is FMNH2.

The catalysed reaction is 5-O-(1-carboxyvinyl)-3-phosphoshikimate = chorismate + phosphate. Its pathway is metabolic intermediate biosynthesis; chorismate biosynthesis; chorismate from D-erythrose 4-phosphate and phosphoenolpyruvate: step 7/7. Its function is as follows. Catalyzes the anti-1,4-elimination of the C-3 phosphate and the C-6 proR hydrogen from 5-enolpyruvylshikimate-3-phosphate (EPSP) to yield chorismate, which is the branch point compound that serves as the starting substrate for the three terminal pathways of aromatic amino acid biosynthesis. This reaction introduces a second double bond into the aromatic ring system. The chain is Chorismate synthase from Caldicellulosiruptor bescii (strain ATCC BAA-1888 / DSM 6725 / KCTC 15123 / Z-1320) (Anaerocellum thermophilum).